We begin with the raw amino-acid sequence, 377 residues long: Cobalt-precorrin-5B C(1)-methyltransferase (377 aa).

Residues 1 to 21 are disordered; it reads MNPVRQPYDLAAPAPNGMRRG.

The protein belongs to the CbiD family.

The enzyme catalyses Co-precorrin-5B + S-adenosyl-L-methionine = Co-precorrin-6A + S-adenosyl-L-homocysteine. Its pathway is cofactor biosynthesis; adenosylcobalamin biosynthesis; cob(II)yrinate a,c-diamide from sirohydrochlorin (anaerobic route): step 6/10. In terms of biological role, catalyzes the methylation of C-1 in cobalt-precorrin-5B to form cobalt-precorrin-6A. This Chromobacterium violaceum (strain ATCC 12472 / DSM 30191 / JCM 1249 / CCUG 213 / NBRC 12614 / NCIMB 9131 / NCTC 9757 / MK) protein is Cobalt-precorrin-5B C(1)-methyltransferase.